The following is a 303-amino-acid chain: uncharacterized protein (303 aa).

An S4 RNA-binding domain is found at 15–74 (ERIDKFLASTENDWSRTQVQQWVKDGQVVVNGSAVKANYKIQPGDQVTVTVPEPEALDVL). Asp138 is a catalytic residue.

It belongs to the pseudouridine synthase RluA family.

The enzyme catalyses a uridine in RNA = a pseudouridine in RNA. This is an uncharacterized protein from Bacillus subtilis (strain 168).